A 562-amino-acid chain; its full sequence is Catalase T (562 aa).

Catalysis depends on residues H64 and N137. Y351 contributes to the heme binding site.

Belongs to the catalase family. As to quaternary structure, homotetramer. Heme is required as a cofactor.

Its subcellular location is the cytoplasm. The catalysed reaction is 2 H2O2 = O2 + 2 H2O. Functionally, occurs in almost all aerobically respiring organisms and serves to protect cells from the toxic effects of hydrogen peroxide. This Saccharomyces cerevisiae (strain YJM789) (Baker's yeast) protein is Catalase T (CTT1).